Consider the following 147-residue polypeptide: Siroheme decarboxylase NirG subunit (147 aa).

This sequence belongs to the Ahb/Nir family. Probably forms a complex composed of NirD, NirL, NirG and NirH. All proteins are required for the total conversion of siroheme to didecarboxysiroheme.

The catalysed reaction is siroheme + 2 H(+) = 12,18-didecarboxysiroheme + 2 CO2. The protein operates within porphyrin-containing compound metabolism. In terms of biological role, involved in heme d1 biosynthesis. Catalyzes the decarboxylation of siroheme into didecarboxysiroheme. The sequence is that of Siroheme decarboxylase NirG subunit from Pseudomonas aeruginosa (strain ATCC 15692 / DSM 22644 / CIP 104116 / JCM 14847 / LMG 12228 / 1C / PRS 101 / PAO1).